A 213-amino-acid chain; its full sequence is Orotate phosphoribosyltransferase (213 aa).

Position 26 (K26) interacts with 5-phospho-alpha-D-ribose 1-diphosphate. 34–35 (FF) contributes to the orotate binding site. 5-phospho-alpha-D-ribose 1-diphosphate-binding positions include 72 to 73 (YK), R98, K99, K102, H104, and 123 to 131 (DDVISAGTS). The orotate site is built by S127 and R155.

Belongs to the purine/pyrimidine phosphoribosyltransferase family. PyrE subfamily. Homodimer. It depends on Mg(2+) as a cofactor.

It carries out the reaction orotidine 5'-phosphate + diphosphate = orotate + 5-phospho-alpha-D-ribose 1-diphosphate. The protein operates within pyrimidine metabolism; UMP biosynthesis via de novo pathway; UMP from orotate: step 1/2. Catalyzes the transfer of a ribosyl phosphate group from 5-phosphoribose 1-diphosphate to orotate, leading to the formation of orotidine monophosphate (OMP). This chain is Orotate phosphoribosyltransferase, found in Neisseria meningitidis serogroup C (strain 053442).